Here is a 209-residue protein sequence, read N- to C-terminus: Large ribosomal subunit protein uL3 (209 aa).

The segment at 127 to 151 (SGGPSSHGSKFHRHLGGTGQATTPA) is disordered.

Belongs to the universal ribosomal protein uL3 family. In terms of assembly, part of the 50S ribosomal subunit. Forms a cluster with proteins L14 and L19.

One of the primary rRNA binding proteins, it binds directly near the 3'-end of the 23S rRNA, where it nucleates assembly of the 50S subunit. The chain is Large ribosomal subunit protein uL3 from Borrelia duttonii (strain Ly).